The chain runs to 626 residues: (R)-linalool synthase 2, chloroplastic (626 aa).

A chloroplast-targeting transit peptide spans 1 to 21; it reads MAFVSIAPLASRCCVHKSFVS. Residues D377, D381, and E529 each contribute to the Mg(2+) site. The DDXXD motif signature appears at 377-381; sequence DDIYD.

The protein belongs to the terpene synthase family. Tpsd subfamily. It depends on Mg(2+) as a cofactor. The cofactor is Mn(2+).

The protein localises to the plastid. It is found in the chloroplast. The catalysed reaction is (2E)-geranyl diphosphate + H2O = (R)-linalool + diphosphate. Its pathway is terpene metabolism; oleoresin biosynthesis. In terms of biological role, terpene synthase (mono-TPS) involved in the biosynthesis of monoterpene natural products included in conifer oleoresin secretions and volatile emissions; these compounds contribute to biotic and abiotic stress defense against herbivores and pathogens. Catalyzes the conversion of (2E)-geranyl diphosphate (GPP) to (R)-linalool. This chain is (R)-linalool synthase 2, chloroplastic, found in Picea sitchensis (Sitka spruce).